Consider the following 273-residue polypeptide: UPF0380 protein YafZ (273 aa).

This sequence belongs to the UPF0380 family.

The sequence is that of UPF0380 protein YafZ (yafZ) from Escherichia coli (strain K12).